Reading from the N-terminus, the 20-residue chain is ADDINPKEECFFEDDYYEFE.

It belongs to the flavin monoamine oxidase family. FIG1 subfamily. Monomer. This is in contrast with most of its orthologs, that are non-covalently linked homodimers. Requires FAD as cofactor. Post-translationally, N-glycosylated. Expressed by the venom gland.

It localises to the secreted. The catalysed reaction is an L-alpha-amino acid + O2 + H2O = a 2-oxocarboxylate + H2O2 + NH4(+). It catalyses the reaction L-leucine + O2 + H2O = 4-methyl-2-oxopentanoate + H2O2 + NH4(+). The enzyme catalyses L-phenylalanine + O2 + H2O = 3-phenylpyruvate + H2O2 + NH4(+). It carries out the reaction L-tryptophan + O2 + H2O = indole-3-pyruvate + H2O2 + NH4(+). The catalysed reaction is L-methionine + O2 + H2O = 4-methylsulfanyl-2-oxobutanoate + H2O2 + NH4(+). It catalyses the reaction L-isoleucine + O2 + H2O = (S)-3-methyl-2-oxopentanoate + H2O2 + NH4(+). The enzyme catalyses L-tyrosine + O2 + H2O = 3-(4-hydroxyphenyl)pyruvate + H2O2 + NH4(+). Functionally, catalyzes an oxidative deamination of predominantly hydrophobic and aromatic L-amino acids, thus producing hydrogen peroxide that may contribute to the diverse toxic effects of this enzyme. Is active on L-Met, L-Ile, L-Leu, L-Phe, L-Trp, and L-Tyr. Exhibits diverse biological activities, such as hemorrhage, hemolysis, edema, apoptosis of vascular endothelial cells or tumor cell lines, antibacterial and antiparasitic activities, as well as regulation of platelet aggregation. Its effect on platelets is controversial, since it either induces aggregation or inhibits agonist-induced aggregation. These different effects are probably due to different experimental conditions. The protein is L-amino-acid oxidase L1 of Daboia russelii (Russel's viper).